The sequence spans 164 residues: Interferon gamma (164 aa).

Positions 1–19 are cleaved as a signal peptide; that stretch reads MTCQTYNLFVLSVIMIYYG. 2 N-linked (GlcNAc...) asparagine glycosylation sites follow: Asn42 and Asn61.

This sequence belongs to the type II (or gamma) interferon family. In terms of assembly, homodimer.

The protein localises to the secreted. Functionally, produced by lymphocytes activated by specific antigens or mitogens. IFN-gamma, in addition to having antiviral activity, has important immunoregulatory functions. It is a potent activator of macrophages, it has antiproliferative effects on transformed cells and it can potentiate the antiviral and antitumor effects of the type I interferons. This Meleagris gallopavo (Wild turkey) protein is Interferon gamma (IFNG).